Reading from the N-terminus, the 449-residue chain is Protein adenylyltransferase FICD (449 aa).

Residues 15–35 (LLWGWGPILFGLLGSVFVLLL) traverse the membrane as a helical segment. TPR repeat units lie at residues 96 to 129 (AKAA…NPEF) and 130 to 163 (VEAL…SPCH). The Inhibitory (S/T)XXXE(G/N) motif motif lies at 220-225 (TVAIEG). Residues Glu-224, 250-251 (EQ), 358-360 (GNG), and Arg-364 each bind ATP. Residues 275-410 (ITVNDILEIH…VRPFIRFIAK (136 aa)) enclose the Fido domain.

Belongs to the fic family.

It localises to the membrane. It catalyses the reaction L-tyrosyl-[protein] + ATP = O-(5'-adenylyl)-L-tyrosyl-[protein] + diphosphate. The enzyme catalyses L-threonyl-[protein] + ATP = 3-O-(5'-adenylyl)-L-threonyl-[protein] + diphosphate. Adenylyltransferase activity is inhibited by the inhibitory helix present at the N-terminus: Glu-224 binds ATP and competes with ATP-binding at Arg-364, thereby preventing adenylyltransferase activity. Activation dissociates ATP-binding from Glu-224, allowing ordered binding of the entire ATP moiety with the alpha-phosphate in an orientation that is productive for accepting an incoming target hydroxyl side chain. Its function is as follows. Adenylyltransferase that mediates the addition of adenosine 5'-monophosphate (AMP) to specific residues of target proteins. The chain is Protein adenylyltransferase FICD (ficd) from Danio rerio (Zebrafish).